Here is a 171-residue protein sequence, read N- to C-terminus: Lipoprotein signal peptidase (171 aa).

Helical transmembrane passes span 8 to 28 (SFLW…YIVV), 64 to 84 (WQQY…VYFL), and 99 to 119 (ALII…GFVV). Catalysis depends on residues aspartate 120 and aspartate 138. The helical transmembrane segment at 133–153 (VFNIADIAICIGAGLLALDAF) threads the bilayer.

The protein belongs to the peptidase A8 family.

The protein resides in the cell inner membrane. The catalysed reaction is Release of signal peptides from bacterial membrane prolipoproteins. Hydrolyzes -Xaa-Yaa-Zaa-|-(S,diacylglyceryl)Cys-, in which Xaa is hydrophobic (preferably Leu), and Yaa (Ala or Ser) and Zaa (Gly or Ala) have small, neutral side chains.. It functions in the pathway protein modification; lipoprotein biosynthesis (signal peptide cleavage). In terms of biological role, this protein specifically catalyzes the removal of signal peptides from prolipoproteins. The polypeptide is Lipoprotein signal peptidase (Haemophilus influenzae (strain PittGG)).